A 93-amino-acid polypeptide reads, in one-letter code: uncharacterized protein (93 aa).

This is an uncharacterized protein from Escherichia coli (strain K12).